The sequence spans 257 residues: MLARRIIPCLDVRDGLVVKGVKFRNHETIGEIVPLAELYAQQGADELVFYDITASSDQRVVDKSWVTRIAQVIDIPFCVAGGIKSVEDAGRILEMGADKISINSPALANPSLIRELHDTFGQQCVVVGIDSYFNEETGKYQVHQYTGDESRTQITRWQTADWVKEVQQHGAGEIVLNCMNQDGVRQGYDITQLTAIRENCAVPLIASGGAGEKVHFKDVFEQADVDGALAASVFHKGIIPIPELKAYLREQQVAIRD.

Catalysis depends on residues Asp-11 and Asp-130.

It belongs to the HisA/HisF family. Heterodimer of HisH and HisF.

It is found in the cytoplasm. The catalysed reaction is 5-[(5-phospho-1-deoxy-D-ribulos-1-ylimino)methylamino]-1-(5-phospho-beta-D-ribosyl)imidazole-4-carboxamide + L-glutamine = D-erythro-1-(imidazol-4-yl)glycerol 3-phosphate + 5-amino-1-(5-phospho-beta-D-ribosyl)imidazole-4-carboxamide + L-glutamate + H(+). Its pathway is amino-acid biosynthesis; L-histidine biosynthesis; L-histidine from 5-phospho-alpha-D-ribose 1-diphosphate: step 5/9. Its function is as follows. IGPS catalyzes the conversion of PRFAR and glutamine to IGP, AICAR and glutamate. The HisF subunit catalyzes the cyclization activity that produces IGP and AICAR from PRFAR using the ammonia provided by the HisH subunit. The sequence is that of Imidazole glycerol phosphate synthase subunit HisF from Pseudoalteromonas atlantica (strain T6c / ATCC BAA-1087).